A 365-amino-acid chain; its full sequence is UDP-N-acetylglucosamine--N-acetylmuramyl-(pentapeptide) pyrophosphoryl-undecaprenol N-acetylglucosamine transferase (365 aa).

UDP-N-acetyl-alpha-D-glucosamine-binding positions include 17–19 (TGG), Asn129, Arg167, Ser194, Ile250, 269–274 (ALTVSE), and Gln295.

Belongs to the glycosyltransferase 28 family. MurG subfamily.

It is found in the cell inner membrane. It carries out the reaction di-trans,octa-cis-undecaprenyl diphospho-N-acetyl-alpha-D-muramoyl-L-alanyl-D-glutamyl-meso-2,6-diaminopimeloyl-D-alanyl-D-alanine + UDP-N-acetyl-alpha-D-glucosamine = di-trans,octa-cis-undecaprenyl diphospho-[N-acetyl-alpha-D-glucosaminyl-(1-&gt;4)]-N-acetyl-alpha-D-muramoyl-L-alanyl-D-glutamyl-meso-2,6-diaminopimeloyl-D-alanyl-D-alanine + UDP + H(+). Its pathway is cell wall biogenesis; peptidoglycan biosynthesis. In terms of biological role, cell wall formation. Catalyzes the transfer of a GlcNAc subunit on undecaprenyl-pyrophosphoryl-MurNAc-pentapeptide (lipid intermediate I) to form undecaprenyl-pyrophosphoryl-MurNAc-(pentapeptide)GlcNAc (lipid intermediate II). This Shewanella piezotolerans (strain WP3 / JCM 13877) protein is UDP-N-acetylglucosamine--N-acetylmuramyl-(pentapeptide) pyrophosphoryl-undecaprenol N-acetylglucosamine transferase.